A 3079-amino-acid chain; its full sequence is Inhibitory regulator protein IRA2 (3079 aa).

Positions 392–554 (NQNAHQGSSS…RASYDAHKTG (163 aa)) are disordered. Residues 399–416 (SSSPSSSSPSSPPSSSSS) show a composition bias toward low complexity. The segment covering 417 to 442 (DNNNQNIIAKSLSRQLSHHQSYIQQQ) has biased composition (polar residues). Low complexity predominate over residues 449–477 (SSWTTNSQSSTSLSSSTSNSTTTDFSTHT). Positions 488–497 (DTPTMSNITI) are enriched in polar residues. Over residues 498–528 (SASSLLSQTPTPTTQLQQRLNSAAAAAAAAA) the composition is skewed to low complexity. Residues 529 to 546 (SPSNSTPTGYTAEQQSRA) show a composition bias toward polar residues. Position 635 is a phosphothreonine (Thr635). Disordered regions lie at residues 867 to 898 (FKGSSPSLCSTTRSRSGSTSQSSMTPVSPLGL), 912 to 935 (GSSTSRNSDNVNSLNSSPKNLSSD), and 952 to 980 (GPSSIIRNKIPTTLTSPPGTEKSSPVQRP). Composition is skewed to low complexity over residues 873 to 894 (SLCSTTRSRSGSTSQSSMTPVS) and 921 to 934 (NVNSLNSSPKNLSS). A compositionally biased stretch (polar residues) spans 961–980 (IPTTLTSPPGTEKSSPVQRP). The Ras-GAP domain maps to 1717 to 1922 (NATHIVVAQL…DRIFRFLAEL (206 aa)).

The protein resides in the cytoplasm. Inhibitory regulator of the Ras-cyclic AMP pathway. Stimulates the GTPase activity of Ras proteins. In Saccharomyces cerevisiae (strain ATCC 204508 / S288c) (Baker's yeast), this protein is Inhibitory regulator protein IRA2 (IRA2).